A 533-amino-acid polypeptide reads, in one-letter code: Probable fucosyltransferase 5 (533 aa).

The Cytoplasmic segment spans residues 1–13 (MYQKFQISGKIVK). A helical; Signal-anchor for type II membrane protein membrane pass occupies residues 14–34 (TLGLKMKVLIAVSFGSLLFIL). The Lumenal portion of the chain corresponds to 35–533 (SYSNNFNNKL…YGGLKLYDEF (499 aa)). 5 N-linked (GlcNAc...) asparagine glycosylation sites follow: asparagine 202, asparagine 227, asparagine 374, asparagine 396, and asparagine 475.

Belongs to the glycosyltransferase 37 family. As to expression, expressed in roots, leaves, flowers and siliques.

It localises to the golgi apparatus. The protein resides in the golgi stack membrane. It functions in the pathway protein modification; protein glycosylation. Functionally, may be involved in cell wall biosynthesis. May act as a fucosyltransferase. This is Probable fucosyltransferase 5 (FUT5) from Arabidopsis thaliana (Mouse-ear cress).